A 613-amino-acid chain; its full sequence is Kelch-like protein 36 (613 aa).

The region spanning 45-112 (CDVVLVVEEQ…LYSSELELDG (68 aa)) is the BTB domain. Positions 147 to 249 (YLYLQELASI…PEDILLQRVK (103 aa)) constitute a BACK domain. Kelch repeat units lie at residues 294–343 (CLLF…VLGG), 344–395 (FIFV…SIED), 396–442 (MLVA…IYKD), 444–491 (VYIS…SLGD), 492–544 (SIYS…VWQG), and 545–593 (RIYI…VCAL).

In terms of assembly, interacts with CUL3.

It participates in protein modification; protein ubiquitination. Functionally, probable substrate-specific adapter of an E3 ubiquitin-protein ligase complex which mediates the ubiquitination and subsequent proteasomal degradation of target proteins. This Rattus norvegicus (Rat) protein is Kelch-like protein 36 (Klhl36).